The primary structure comprises 314 residues: MPIRIDKKLPAVEILRTENIFVMDDQRAAHQDIRPLKILILNLMPQKMVTETQLLRHLANTPLQLDIDFLYMESHRSKTTRSEHMETFYKTFPEVKDEYFDGMIITGAPVEHLPFEEVDYWEEFRQMLEWSKTHVYSTLHICWGAQAGLYLRYGVEKYQMDSKLSGIYPQDTLKEGHLLFRGFDDSYVSPHSRHTEISKEEVLNKTNLEILSEGPQVGVSILASRDLREIYSFGHLEYDRDTLAKEYFRDRDAGFDPHIPENYFKDDDVNQVPCLCWSSSAALFFSNWVNHAVYQETPFDWRKIEDDASAYGYL.

C142 (acyl-thioester intermediate) is an active-site residue. Substrate-binding residues include K163 and S192. H235 serves as the catalytic Proton acceptor. E237 is a catalytic residue. Residue R249 participates in substrate binding.

It belongs to the MetA family.

It is found in the cytoplasm. The catalysed reaction is L-homoserine + acetyl-CoA = O-acetyl-L-homoserine + CoA. Its pathway is amino-acid biosynthesis; L-methionine biosynthesis via de novo pathway; O-acetyl-L-homoserine from L-homoserine: step 1/1. Transfers an acetyl group from acetyl-CoA to L-homoserine, forming acetyl-L-homoserine. The polypeptide is Homoserine O-acetyltransferase (Streptococcus pneumoniae (strain JJA)).